Consider the following 614-residue polypeptide: Dihydroxy-acid dehydratase (614 aa).

Aspartate 81 is a Mg(2+) binding site. Cysteine 122 serves as a coordination point for [2Fe-2S] cluster. Mg(2+)-binding residues include aspartate 123 and lysine 124. Lysine 124 is modified (N6-carboxylysine). Residue cysteine 195 participates in [2Fe-2S] cluster binding. Position 491 (glutamate 491) interacts with Mg(2+). The Proton acceptor role is filled by serine 517.

The protein belongs to the IlvD/Edd family. Homodimer. It depends on [2Fe-2S] cluster as a cofactor. Requires Mg(2+) as cofactor.

It carries out the reaction (2R)-2,3-dihydroxy-3-methylbutanoate = 3-methyl-2-oxobutanoate + H2O. It catalyses the reaction (2R,3R)-2,3-dihydroxy-3-methylpentanoate = (S)-3-methyl-2-oxopentanoate + H2O. It functions in the pathway amino-acid biosynthesis; L-isoleucine biosynthesis; L-isoleucine from 2-oxobutanoate: step 3/4. Its pathway is amino-acid biosynthesis; L-valine biosynthesis; L-valine from pyruvate: step 3/4. In terms of biological role, functions in the biosynthesis of branched-chain amino acids. Catalyzes the dehydration of (2R,3R)-2,3-dihydroxy-3-methylpentanoate (2,3-dihydroxy-3-methylvalerate) into 2-oxo-3-methylpentanoate (2-oxo-3-methylvalerate) and of (2R)-2,3-dihydroxy-3-methylbutanoate (2,3-dihydroxyisovalerate) into 2-oxo-3-methylbutanoate (2-oxoisovalerate), the penultimate precursor to L-isoleucine and L-valine, respectively. This Nitrobacter winogradskyi (strain ATCC 25391 / DSM 10237 / CIP 104748 / NCIMB 11846 / Nb-255) protein is Dihydroxy-acid dehydratase.